Here is a 292-residue protein sequence, read N- to C-terminus: Probable serine/threonine-protein kinase FPV226 (292 aa).

The Protein kinase domain maps to 14–292; that stretch reads WKIDKLIGCG…DLLRQLVNSL (279 aa). ATP contacts are provided by residues 20-28 and Lys43; that span reads IGCGGFGCV. The Proton acceptor role is filled by Asp147.

The protein belongs to the protein kinase superfamily. Ser/Thr protein kinase family. Poxviruses subfamily.

It carries out the reaction L-seryl-[protein] + ATP = O-phospho-L-seryl-[protein] + ADP + H(+). The catalysed reaction is L-threonyl-[protein] + ATP = O-phospho-L-threonyl-[protein] + ADP + H(+). In Vertebrata (FPV), this protein is Probable serine/threonine-protein kinase FPV226.